Consider the following 128-residue polypeptide: MSLCSACTSPASHQLLLNCQGQTVAKSHSSADAGVSLVSGRWCAWWPEHCSESMFPSQHPVLSSNLADSSGQGRSPAGAHPALCPFHKSPWFPHFPQILPREWSWCGPERPAGCSLGLKAEAALVGKK.

This is an uncharacterized protein from Homo sapiens (Human).